A 207-amino-acid chain; its full sequence is Probable GTP-binding protein EngB (207 aa).

The EngB-type G domain occupies 22 to 194 (DLPEIAFAGR…WRRIEEVLPA (173 aa)). Residues 30-37 (GRSNVGKS), 57-61 (GRTQL), 75-78 (DLPG), 142-145 (TKCD), and 173-175 (FSA) each bind GTP. The Mg(2+) site is built by S37 and T59.

The protein belongs to the TRAFAC class TrmE-Era-EngA-EngB-Septin-like GTPase superfamily. EngB GTPase family. Mg(2+) is required as a cofactor.

Necessary for normal cell division and for the maintenance of normal septation. The chain is Probable GTP-binding protein EngB from Geotalea daltonii (strain DSM 22248 / JCM 15807 / FRC-32) (Geobacter daltonii).